The primary structure comprises 212 residues: Uridine kinase (212 aa).

13–20 is a binding site for ATP; it reads GGSGSGKT.

This sequence belongs to the uridine kinase family.

It localises to the cytoplasm. It catalyses the reaction uridine + ATP = UMP + ADP + H(+). It carries out the reaction cytidine + ATP = CMP + ADP + H(+). It participates in pyrimidine metabolism; CTP biosynthesis via salvage pathway; CTP from cytidine: step 1/3. It functions in the pathway pyrimidine metabolism; UMP biosynthesis via salvage pathway; UMP from uridine: step 1/1. This Bacillus thuringiensis (strain Al Hakam) protein is Uridine kinase.